The following is a 151-amino-acid chain: UPF0336 protein Franean1_6066 (151 aa).

Residues 8–127 (VGRSYTSDVP…NEVLVTSYEF (120 aa)) form the MaoC-like domain.

Belongs to the UPF0336 family.

This is UPF0336 protein Franean1_6066 from Parafrankia sp. (strain EAN1pec).